Reading from the N-terminus, the 1186-residue chain is ATP-dependent helicase/nuclease subunit A (1186 aa).

A UvrD-like helicase ATP-binding domain is found at 2–460 (NFSKNQRAVI…IELSENYRSQ (459 aa)). 23–30 (ASAGSGKT) serves as a coordination point for ATP. In terms of domain architecture, UvrD-like helicase C-terminal spans 487-771 (DVELKAANRD…SVMTIHAAKG (285 aa)).

The protein belongs to the helicase family. AddA subfamily. As to quaternary structure, heterodimer of AddA and AddB/RexB. The cofactor is Mg(2+).

The catalysed reaction is Couples ATP hydrolysis with the unwinding of duplex DNA by translocating in the 3'-5' direction.. It carries out the reaction ATP + H2O = ADP + phosphate + H(+). In terms of biological role, the heterodimer acts as both an ATP-dependent DNA helicase and an ATP-dependent, dual-direction single-stranded exonuclease. Recognizes the chi site generating a DNA molecule suitable for the initiation of homologous recombination. The AddA nuclease domain is required for chi fragment generation; this subunit has the helicase and 3' -&gt; 5' nuclease activities. The chain is ATP-dependent helicase/nuclease subunit A from Oenococcus oeni (strain ATCC BAA-331 / PSU-1).